The sequence spans 274 residues: Penicillin-insensitive murein endopeptidase (274 aa).

Positions 1-19 are cleaved as a signal peptide; the sequence is MNKTAIALLALLASSASLA. 3 disulfide bridges follow: Cys-44–Cys-265, Cys-187–Cys-235, and Cys-216–Cys-223. Residues His-110, His-113, Asp-120, Asp-147, His-150, and His-211 each coordinate Zn(2+). Residues 228 to 264 are disordered; it reads LPPPGDGCGAELQSWFAPPKPGTTKPEKKTPSPLPPS.

Belongs to the peptidase M74 family. As to quaternary structure, dimer. Zn(2+) is required as a cofactor.

It is found in the periplasm. Functionally, murein endopeptidase that cleaves the D-alanyl-meso-2,6-diamino-pimelyl amide bond that connects peptidoglycan strands. Likely plays a role in the removal of murein from the sacculus. This is Penicillin-insensitive murein endopeptidase from Escherichia coli (strain 55989 / EAEC).